A 137-amino-acid chain; its full sequence is Nucleoside diphosphate kinase (137 aa).

Residues lysine 9, phenylalanine 57, arginine 85, threonine 91, arginine 102, and asparagine 112 each contribute to the ATP site. Histidine 115 (pros-phosphohistidine intermediate) is an active-site residue.

Belongs to the NDK family. In terms of assembly, homotetramer. Mg(2+) serves as cofactor.

The protein resides in the cytoplasm. It carries out the reaction a 2'-deoxyribonucleoside 5'-diphosphate + ATP = a 2'-deoxyribonucleoside 5'-triphosphate + ADP. The catalysed reaction is a ribonucleoside 5'-diphosphate + ATP = a ribonucleoside 5'-triphosphate + ADP. Its function is as follows. Major role in the synthesis of nucleoside triphosphates other than ATP. The ATP gamma phosphate is transferred to the NDP beta phosphate via a ping-pong mechanism, using a phosphorylated active-site intermediate. This Campylobacter lari (strain RM2100 / D67 / ATCC BAA-1060) protein is Nucleoside diphosphate kinase.